The sequence spans 551 residues: Formate--tetrahydrofolate ligase (551 aa).

T65–T72 is a binding site for ATP.

It belongs to the formate--tetrahydrofolate ligase family.

It carries out the reaction (6S)-5,6,7,8-tetrahydrofolate + formate + ATP = (6R)-10-formyltetrahydrofolate + ADP + phosphate. It functions in the pathway one-carbon metabolism; tetrahydrofolate interconversion. The polypeptide is Formate--tetrahydrofolate ligase (Thermosipho africanus (strain TCF52B)).